Reading from the N-terminus, the 781-residue chain is MNIAEEPSDEVISSGPEDTDICSQQTSASAEAGDQSIKIERKTSTGLQLEQLANTNLLTIRIKWQLQEEEDDHCNSRITDQIMDTIQHYKGISVNNSDTETYEFLPDTRRLQVLEQNKDIYLYEHGSQEYEKSYKDNEEEDDWRYDTVLQAQFKYPKSLENACTDISELLKSEPIGQHIDKWSIGVNKHALTYPGNIFVGGIAKSLSIGELSFLFSKYGPILSMKLIYDKTKGEPNGYGFISYPLGSQASLCIKELNGRTVNGSTLFINYHVERKERERIHWDHVKENNNDDNFRCLFIGNLPYHNPEKVETLITPKEVIEVIKKELSKKFPDFDIISYYFPKRSNTRSSSSVSFNEEGSVESNKSSNNTNGNAQDEDMLKGYGFIKLINHEQALAAIETFNGFMWHGNRLVVNKAVQHKVYNNHNSHDRHPSISNHNDMEVLEFANNPMYDYNNYTYDRYYFNNNKNGNSNDTSNVRYFDSVRSTPVAEKMDLFYPQRESFSEGRGQRVPRFMGNKFDMYQYPSTSYSLPIPMSNQQESNLYVKHIPLSWTDEDLYDFYKSFGEIISVKVITVGGSKNKYRQQSNDSSSDNDLPVGSSRGYGFVSFESPLDAAKAILNTDGYQVSKDQVLSVSFAQKRGNLSSSDDDDQSQTDNSSKFQNFQPHNDYHKAYPTKYNKKFINALMTQNQSQQQVSRENYFIPLQYPNTNTKPVNSYNLISANQNNANWMMPMFPSFGFIPQVPPVPYIIPPQNPAANHIPIMANGSNEEEEFSSGDYSMDY.

Residues 1 to 34 (MNIAEEPSDEVISSGPEDTDICSQQTSASAEAGD) form a disordered region. Phosphoserine is present on S29. RRM domains follow at residues 195–273 (GNIF…YHVE) and 295–418 (RCLF…KAVQ). The interval 345–375 (SNTRSSSSVSFNEEGSVESNKSSNNTNGNAQ) is disordered. Low complexity predominate over residues 347-364 (TRSSSSVSFNEEGSVESN). Polar residues predominate over residues 365-374 (KSSNNTNGNA). S433, S435, S482, and S485 each carry phosphoserine. T486 is subject to Phosphothreonine. Position 501 is a phosphoserine (S501). The RRM 3 domain maps to 540–638 (SNLYVKHIPL…QVLSVSFAQK (99 aa)). Residues 640-668 (GNLSSSDDDDQSQTDNSSKFQNFQPHNDY) form a disordered region.

In terms of assembly, interacts with RBG1.

This is an uncharacterized protein from Saccharomyces cerevisiae (strain ATCC 204508 / S288c) (Baker's yeast).